We begin with the raw amino-acid sequence, 117 residues long: Fluoride-specific ion channel FluC 2 (117 aa).

The next 2 helical transmembrane spans lie at 1–21 (MISI…RSAI) and 46–66 (FLIG…AFFV). 2 residues coordinate Na(+): G71 and T74. A helical transmembrane segment spans residues 95 to 115 (LFLNYSLLQFIIGFIACYIGY).

It belongs to the fluoride channel Fluc/FEX (TC 1.A.43) family.

The protein localises to the cell membrane. The catalysed reaction is fluoride(in) = fluoride(out). Na(+) is not transported, but it plays an essential structural role and its presence is essential for fluoride channel function. Its function is as follows. Fluoride-specific ion channel. Important for reducing fluoride concentration in the cell, thus reducing its toxicity. This Staphylococcus aureus (strain MRSA252) protein is Fluoride-specific ion channel FluC 2.